We begin with the raw amino-acid sequence, 239 residues long: 4-hydroxy-tetrahydrodipicolinate reductase (239 aa).

Residues glycine 8 to methionine 13, glycine 78 to threonine 80, and serine 102 to methionine 105 each bind NAD(+). Histidine 134 functions as the Proton donor/acceptor in the catalytic mechanism. Histidine 135 provides a ligand contact to (S)-2,3,4,5-tetrahydrodipicolinate. Lysine 138 (proton donor) is an active-site residue. Glycine 144 to threonine 145 lines the (S)-2,3,4,5-tetrahydrodipicolinate pocket.

Belongs to the DapB family.

The protein resides in the cytoplasm. The enzyme catalyses (S)-2,3,4,5-tetrahydrodipicolinate + NAD(+) + H2O = (2S,4S)-4-hydroxy-2,3,4,5-tetrahydrodipicolinate + NADH + H(+). It carries out the reaction (S)-2,3,4,5-tetrahydrodipicolinate + NADP(+) + H2O = (2S,4S)-4-hydroxy-2,3,4,5-tetrahydrodipicolinate + NADPH + H(+). It participates in amino-acid biosynthesis; L-lysine biosynthesis via DAP pathway; (S)-tetrahydrodipicolinate from L-aspartate: step 4/4. In terms of biological role, catalyzes the conversion of 4-hydroxy-tetrahydrodipicolinate (HTPA) to tetrahydrodipicolinate. The chain is 4-hydroxy-tetrahydrodipicolinate reductase from Rickettsia conorii (strain ATCC VR-613 / Malish 7).